The sequence spans 202 residues: CASP-like protein 2B1 (202 aa).

Residues 1-29 (MSYLGVGVSPGNVPVYHGTNSKVIDRRVR) lie on the Cytoplasmic side of the membrane. Residues 30 to 50 (LAELVLRCVICCLGVLAAVLV) traverse the membrane as a helical segment. Residues 51-72 (GTDTQVKEIFSIQKKARFTDMK) are Extracellular-facing. Residues 73–93 (ALVFLVAANGIAAAYSFVQGV) traverse the membrane as a helical segment. The Cytoplasmic portion of the chain corresponds to 94–109 (RCVVGMVKGSVLFSKP). Residues 110-132 (LAWVIFSGDQMMAYLTMSAVAAA) form a helical membrane-spanning segment. The Extracellular portion of the chain corresponds to 133-164 (AQSSVFAKLGQPDLQWMKICTMYGKFCNQVGE). The chain crosses the membrane as a helical span at residues 165 to 185 (GIASALLVSVSMVVLSCISAF). Residues 186–202 (SLFRLYGGNKGKDGARW) are Cytoplasmic-facing.

This sequence belongs to the Casparian strip membrane proteins (CASP) family. In terms of assembly, homodimer and heterodimers.

The protein resides in the cell membrane. The polypeptide is CASP-like protein 2B1 (Populus trichocarpa (Western balsam poplar)).